We begin with the raw amino-acid sequence, 254 residues long: NH(3)-dependent NAD(+) synthetase (254 aa).

29–36 serves as a coordination point for ATP; the sequence is GLSGGIDS. D35 contacts Mg(2+). R115 serves as a coordination point for deamido-NAD(+). Residue T135 coordinates ATP. E140 serves as a coordination point for Mg(2+). 2 residues coordinate deamido-NAD(+): K148 and D155. Positions 164 and 186 each coordinate ATP. A deamido-NAD(+)-binding site is contributed by 245-246; it reads HK.

It belongs to the NAD synthetase family. Homodimer.

The catalysed reaction is deamido-NAD(+) + NH4(+) + ATP = AMP + diphosphate + NAD(+) + H(+). The protein operates within cofactor biosynthesis; NAD(+) biosynthesis; NAD(+) from deamido-NAD(+) (ammonia route): step 1/1. Catalyzes the ATP-dependent amidation of deamido-NAD to form NAD. Uses ammonia as a nitrogen source. The chain is NH(3)-dependent NAD(+) synthetase from Methanococcus aeolicus (strain ATCC BAA-1280 / DSM 17508 / OCM 812 / Nankai-3).